We begin with the raw amino-acid sequence, 498 residues long: POTE ankyrin domain family member A (498 aa).

5 ANK repeats span residues 98–127 (KKRT…QLHV), 131–160 (KKRT…DPNL), 164–193 (YGNT…DIES), 197–226 (GGLT…NLNA), and 230–259 (FGRT…DVFS). Residues 289–410 (NQMPNNSSGN…SNEKNKVKSQ (122 aa)) form a disordered region. A compositionally biased stretch (polar residues) spans 290 to 302 (QMPNNSSGNSNPE). The span at 303–338 (QDLKLTSEEEPQRLKGSENSQHEKVTQEPDINKDCD) shows a compositional bias: basic and acidic residues. Polar residues predominate over residues 348-359 (HGSNNVGLSENL). Over residues 392–406 (EEYHRPEKKSNEKNK) the composition is skewed to basic and acidic residues. Residues 469–497 (EHLLELKNSHYEQLTVEVEQMENMVHVLQ) are a coiled coil.

The protein belongs to the POTE family.

In Homo sapiens (Human), this protein is POTE ankyrin domain family member A (POTEA).